The following is a 350-amino-acid chain: Small-conductance mechanosensitive channel MscMJ (350 aa).

Helical transmembrane passes span 10–30 (ISNI…GKIV), 59–79 (LPII…FLIL), 91–111 (VKVV…DGIF), 130–150 (IIKP…ILTA), and 154–174 (VGYD…ALAL).

Belongs to the MscS (TC 1.A.23) family.

Its subcellular location is the cell membrane. Its function is as follows. Small-conductance mechanosensitive channel that opens in response to stretch forces in the membrane lipid bilayer. Exhibits a sixfold preference for cations over anions. Non-rectifying. This Methanocaldococcus jannaschii (strain ATCC 43067 / DSM 2661 / JAL-1 / JCM 10045 / NBRC 100440) (Methanococcus jannaschii) protein is Small-conductance mechanosensitive channel MscMJ.